The sequence spans 132 residues: Small ribosomal subunit protein uS8 (132 aa).

It belongs to the universal ribosomal protein uS8 family. As to quaternary structure, part of the 30S ribosomal subunit. Contacts proteins S5 and S12.

Its function is as follows. One of the primary rRNA binding proteins, it binds directly to 16S rRNA central domain where it helps coordinate assembly of the platform of the 30S subunit. The polypeptide is Small ribosomal subunit protein uS8 (Bacillus cytotoxicus (strain DSM 22905 / CIP 110041 / 391-98 / NVH 391-98)).